The following is a 91-amino-acid chain: MADDAAQAGDNAEYIKIKVVGQDSNEVHFRVKYGTSMAKLKKSYADRTGVAVNSLRFLFDGRRINDDDTPKTLEMEDDDVIEVYQEQLGGF.

Residues 13-91 (EYIKIKVVGQ…EVYQEQLGGF (79 aa)) form the Ubiquitin-like domain. G90 participates in a covalent cross-link: Glycyl lysine isopeptide (Gly-Lys) (interchain with K-? in acceptor proteins). Residue F91 is a propeptide.

This sequence belongs to the ubiquitin family. SUMO subfamily. Covalently attached to tbx-2. Covalently attached to lin-1. Covalently attached to lin-11. Covalently attached to sop-2. Covalently attached to bet-1. Post-translationally, cleavage of precursor form by ulp-1 is necessary for function.

It localises to the cytoplasm. The protein resides in the nucleus. The protein localises to the cytoskeleton. It is found in the spindle. Its subcellular location is the chromosome. It localises to the microtubule organizing center. The protein resides in the centrosome. Ubiquitin-like protein which can be covalently attached to target lysines as a monomer. Does not seem to be involved in protein degradation and may function as an antagonist of ubiquitin in the degradation process. Plays a role in a number of cellular processes such as nuclear transport, DNA replication and repair, mitosis and signal transduction. Covalent attachment to its substrates requires prior activation by the E1 complex aos-1-uba-2 and linkage to the E2 enzyme ubc-9, and can be promoted by an E3 ligase such as gei-17. Required for embryonic development, fertility, vulval morphogenesis and inhibition of vulval cell fates. Probably by sumoylating bet-1, prevents muscle myosin depletion in aging adults probably by preventing myoblast growth factor receptor egl-15 overexpression. Plays a role in the attenuation of the let-60/ras pathway. Plays a role in male tail tip morphogenesis. Plays a role in the mitochondrial stress response with its covalent attachment to transcription factors dve-1 and afts-1 negatively regulating the mitochondrial unfolded protein response. In Caenorhabditis elegans, this protein is Small ubiquitin-related modifier.